The sequence spans 108 residues: Protein S100-A15A (108 aa).

Positions 53-88 (KEPYYVTELFQATDKNRDNQICFDEFLYILGKLVKD) constitute an EF-hand domain. Ca(2+)-binding residues include Asp66, Asn68, Asp70, Gln72, and Glu77.

This sequence belongs to the S-100 family.

This Gorilla gorilla gorilla (Western lowland gorilla) protein is Protein S100-A15A (S100A15A).